The primary structure comprises 319 residues: Ribonuclease Z (319 aa).

Positions 62, 64, 66, 67, 145, 216, and 274 each coordinate Zn(2+). The active-site Proton acceptor is D66.

Belongs to the RNase Z family. In terms of assembly, homodimer. Requires Zn(2+) as cofactor.

It carries out the reaction Endonucleolytic cleavage of RNA, removing extra 3' nucleotides from tRNA precursor, generating 3' termini of tRNAs. A 3'-hydroxy group is left at the tRNA terminus and a 5'-phosphoryl group is left at the trailer molecule.. Zinc phosphodiesterase, which displays some tRNA 3'-processing endonuclease activity. Probably involved in tRNA maturation, by removing a 3'-trailer from precursor tRNA. The sequence is that of Ribonuclease Z from Synechococcus sp. (strain CC9902).